Reading from the N-terminus, the 322-residue chain is 4-hydroxy-3-methylbut-2-enyl diphosphate reductase (322 aa).

Cys-15 provides a ligand contact to [4Fe-4S] cluster. (2E)-4-hydroxy-3-methylbut-2-enyl diphosphate is bound by residues His-44 and His-77. His-44 and His-77 together coordinate dimethylallyl diphosphate. Residues His-44 and His-77 each contribute to the isopentenyl diphosphate site. Cys-99 is a binding site for [4Fe-4S] cluster. His-127 contacts (2E)-4-hydroxy-3-methylbut-2-enyl diphosphate. His-127 provides a ligand contact to dimethylallyl diphosphate. Position 127 (His-127) interacts with isopentenyl diphosphate. Glu-129 serves as the catalytic Proton donor. Thr-168 contacts (2E)-4-hydroxy-3-methylbut-2-enyl diphosphate. Cys-198 contacts [4Fe-4S] cluster. Positions 226, 227, 228, and 270 each coordinate (2E)-4-hydroxy-3-methylbut-2-enyl diphosphate. Dimethylallyl diphosphate-binding residues include Ser-226, Ser-227, Asn-228, and Ser-270. Isopentenyl diphosphate is bound by residues Ser-226, Ser-227, Asn-228, and Ser-270.

It belongs to the IspH family. [4Fe-4S] cluster is required as a cofactor.

The enzyme catalyses isopentenyl diphosphate + 2 oxidized [2Fe-2S]-[ferredoxin] + H2O = (2E)-4-hydroxy-3-methylbut-2-enyl diphosphate + 2 reduced [2Fe-2S]-[ferredoxin] + 2 H(+). It catalyses the reaction dimethylallyl diphosphate + 2 oxidized [2Fe-2S]-[ferredoxin] + H2O = (2E)-4-hydroxy-3-methylbut-2-enyl diphosphate + 2 reduced [2Fe-2S]-[ferredoxin] + 2 H(+). It functions in the pathway isoprenoid biosynthesis; dimethylallyl diphosphate biosynthesis; dimethylallyl diphosphate from (2E)-4-hydroxy-3-methylbutenyl diphosphate: step 1/1. The protein operates within isoprenoid biosynthesis; isopentenyl diphosphate biosynthesis via DXP pathway; isopentenyl diphosphate from 1-deoxy-D-xylulose 5-phosphate: step 6/6. Functionally, catalyzes the conversion of 1-hydroxy-2-methyl-2-(E)-butenyl 4-diphosphate (HMBPP) into a mixture of isopentenyl diphosphate (IPP) and dimethylallyl diphosphate (DMAPP). Acts in the terminal step of the DOXP/MEP pathway for isoprenoid precursor biosynthesis. This chain is 4-hydroxy-3-methylbut-2-enyl diphosphate reductase, found in Neisseria gonorrhoeae (strain ATCC 700825 / FA 1090).